A 207-amino-acid polypeptide reads, in one-letter code: Small ribosomal subunit protein uS4 (207 aa).

The segment at Arg35–Gln54 is disordered. The S4 RNA-binding domain occupies Arg97–Ile163.

This sequence belongs to the universal ribosomal protein uS4 family. In terms of assembly, part of the 30S ribosomal subunit. Contacts protein S5. The interaction surface between S4 and S5 is involved in control of translational fidelity.

One of the primary rRNA binding proteins, it binds directly to 16S rRNA where it nucleates assembly of the body of the 30S subunit. Its function is as follows. With S5 and S12 plays an important role in translational accuracy. The protein is Small ribosomal subunit protein uS4 of Dehalococcoides mccartyi (strain CBDB1).